Reading from the N-terminus, the 397-residue chain is Protochlorophyllide reductase, chloroplastic (397 aa).

A chloroplast-targeting transit peptide spans 1 to 57 (MALTMSAKSVSARAQVSSKAQAAPAVAVSGRTSSRVMPAPALAARSSVARTPLVVCA).

Belongs to the short-chain dehydrogenases/reductases (SDR) family. POR subfamily.

The protein localises to the plastid. It is found in the chloroplast. It carries out the reaction chlorophyllide a + NADP(+) = protochlorophyllide a + NADPH + H(+). Its pathway is porphyrin-containing compound metabolism; chlorophyll biosynthesis. Its function is as follows. Phototransformation of protochlorophyllide (Pchlide) to chlorophyllide (Chlide). This Chlamydomonas reinhardtii (Chlamydomonas smithii) protein is Protochlorophyllide reductase, chloroplastic (PORA).